The chain runs to 561 residues: uncharacterized protein (561 aa).

6 helical membrane-spanning segments follow: residues L10–I29, F34–G56, L63–G80, V95–H117, L122–L144, and G164–W186. RCK C-terminal domains follow at residues Q205–E287 and H294–S376. The next 5 helical transmembrane spans lie at L386 to V403, G407 to Y429, A442 to G464, F479 to L501, and S538 to F560.

This sequence belongs to the AAE transporter (TC 2.A.81) family.

It is found in the cell membrane. This is an uncharacterized protein from Zymomonas mobilis subsp. mobilis (strain ATCC 31821 / ZM4 / CP4).